Here is a 267-residue protein sequence, read N- to C-terminus: MAAPVVTAPGRALLRAGAGRLLRGGVQELLRPRHEGNAPDLACNFSLSQNRGTVIVERWWKVPLAGEGRKPRLHRRHRVYKLVEDTKHRPKENLELILTQSVENVGVRGDLVSVKKSLGRNRLLPQGLAVYASPENKKLFEEEKLLRQEGKLEKIQTKAGEATVKFLKSCRLEVGMKNNVKWELNPEIVARHFFKNLGVVVAPHTLKLPEEPITRWGEYWCEVTVNGLDTVRVPMSVVNFEKPKTKRYKYWLAQQAAKAMAPTSPQI.

The N-terminal 52 residues, 1-52 (MAAPVVTAPGRALLRAGAGRLLRGGVQELLRPRHEGNAPDLACNFSLSQNRG), are a transit peptide targeting the mitochondrion.

Belongs to the bacterial ribosomal protein bL9 family. In terms of assembly, component of the mitochondrial large ribosomal subunit (mt-LSU). Mature mammalian 55S mitochondrial ribosomes consist of a small (28S) and a large (39S) subunit. The 28S small subunit contains a 12S ribosomal RNA (12S mt-rRNA) and 30 different proteins. The 39S large subunit contains a 16S rRNA (16S mt-rRNA), a copy of mitochondrial valine transfer RNA (mt-tRNA(Val)), which plays an integral structural role, and 52 different proteins.

The protein resides in the mitochondrion. This chain is Large ribosomal subunit protein bL9m (MRPL9), found in Homo sapiens (Human).